Consider the following 473-residue polypeptide: Serine/threonine-protein phosphatase T (473 aa).

TPR repeat units follow at residues A5 to N38, I40 to Y72, and A73 to D106. The tract at residues K159–G472 is catalytic. D217, H219, D246, and N278 together coordinate Mn(2+). Residue H279 is the Proton donor/acceptor of the active site. 2 residues coordinate Mn(2+): H327 and H404.

It belongs to the PPP phosphatase family. PP-5 (PP-T) subfamily. The cofactor is Mg(2+). Requires Mn(2+) as cofactor.

It localises to the nucleus. The enzyme catalyses O-phospho-L-seryl-[protein] + H2O = L-seryl-[protein] + phosphate. It catalyses the reaction O-phospho-L-threonyl-[protein] + H2O = L-threonyl-[protein] + phosphate. Protein phosphatase that specifically binds to and dephosphorylates the molecular chaperone Hsp90. Dephosphorylation positively regulates the Hsp90 chaperone machinery. The sequence is that of Serine/threonine-protein phosphatase T (ppt1) from Schizosaccharomyces pombe (strain 972 / ATCC 24843) (Fission yeast).